A 58-amino-acid polypeptide reads, in one-letter code: uncharacterized protein (58 aa).

This is an uncharacterized protein from Bacillus subtilis (strain 168).